A 256-amino-acid chain; its full sequence is Nuclear shuttle protein (256 aa).

The tract at residues 1-53 (MYPSRNKRGSYFNQRRQYSRNHVWKRPTAAKRHDWKRRPSNTSKPNDEPKMSA) is disordered. Residues 17-39 (QYSRNHVWKRPTAAKRHDWKRRP) are compositionally biased toward basic residues. Residues 21-42 (NHVWKRPTAAKRHDWKRRPSNT) carry the Bipartite nuclear localization signal motif. Residues 81-96 (DLGRSEPNRSRSYIRL) carry the Nuclear localization signal motif. Positions 150-187 (ELFGARIHSHGNLSVTPALKDRYYIRHVCKRVLSVEKD) are interaction with Arabidopsis thaliana NSI protein.

Belongs to the begomovirus nuclear shuttle protein family. As to quaternary structure, binds to single-stranded and double-stranded viral DNA. Interacts with the host nuclear shuttle interacting (NSI) protein. This interaction may allow NSP to recruit NSI monomers to the viral genome and thus regulate nuclear export of viral genome by NSP.

It localises to the host nucleus. Its subcellular location is the host cytoplasm. The protein resides in the host cell membrane. Binds to the genomic viral ssDNA, shuttles it into and out of the cell nucleus. Begomoviruses use 2 proteins to transport their DNA from cell to cell. The nuclear shuttle protein (NSP) shuttles it between nucleus and cytoplasm and the movement protein (MP) probably transports the DNA-NSP complex to the cell periphery and facilitates movement across the cell wall. The sequence is that of Nuclear shuttle protein from Abutilon mosaic virus (isolate West India) (AbMV).